The following is a 241-amino-acid chain: Major prion protein (241 aa).

The signal sequence occupies residues 1–15 (MLVLFVATWSDLGLC). Positions 16–31 (KKRPKPGGWNTGGSRY) are interaction with ADGRG6. The tract at residues 16–223 (KKRPKPGGWN…ESQAYYQRGS (208 aa)) is interaction with GRB2, ERI3 and SYN1. Positions 18-101 (RPKPGGWNTG…WHKPNKPKTS (84 aa)) are disordered. 5 consecutive repeat copies span residues 44–52 (PQGGGGWGQ), 53–60 (PHGGGWGQ), 61–68 (PHGGGWGQ), 69–76 (PHGGGWGQ), and 77–84 (PHGGGWGQ). The segment at 44 to 84 (PQGGGGWGQPHGGGWGQPHGGGWGQPHGGGWGQPHGGGWGQ) is 5 X 8 AA tandem repeats of P-H-G-G-G-W-G-Q. Positions 45-88 (QGGGGWGQPHGGGWGQPHGGGWGQPHGGGWGQPHGGGWGQGGGT) are enriched in gly residues. The Cu(2+) site is built by H54, G55, G56, H62, G63, G64, H70, G71, G72, H78, G79, and G80. A compositionally biased stretch (basic residues) spans 91–101 (QWHKPNKPKTS). C172 and C207 are disulfide-bonded. Residues N174 and N190 are each glycosylated (N-linked (GlcNAc...) asparagine). S223 carries the GPI-anchor amidated serine lipid modification. Positions 224 to 241 (SMVLFSSPPVILLISFLI) are cleaved as a propeptide — removed in mature form.

Belongs to the prion family. Monomer and homodimer. Has a tendency to aggregate into amyloid fibrils containing a cross-beta spine, formed by a steric zipper of superposed beta-strands. Soluble oligomers may represent an intermediate stage on the path to fibril formation. Copper binding may promote oligomerization. Interacts with GRB2, APP, ERI3/PRNPIP and SYN1. Mislocalized cytosolically exposed PrP interacts with MGRN1; this interaction alters MGRN1 subcellular location and causes lysosomal enlargement. Interacts with APP. Interacts with KIAA1191. Interacts with ADGRG6.

The protein localises to the cell membrane. The protein resides in the golgi apparatus. Its function is as follows. Its primary physiological function is unclear. May play a role in neuronal development and synaptic plasticity. May be required for neuronal myelin sheath maintenance. May promote myelin homeostasis through acting as an agonist for ADGRG6 receptor. May play a role in iron uptake and iron homeostasis. Soluble oligomers are toxic to cultured neuroblastoma cells and induce apoptosis (in vitro). Association with GPC1 (via its heparan sulfate chains) targets PRNP to lipid rafts. Also provides Cu(2+) or Zn(2+) for the ascorbate-mediated GPC1 deaminase degradation of its heparan sulfate side chains. The polypeptide is Major prion protein (PRNP) (Mandrillus sphinx (Mandrill)).